The chain runs to 977 residues: Macrophage colony-stimulating factor 1 receptor (977 aa).

Residues 1–18 (MFFALLFLIGILLGQVQG) form the signal peptide. Topologically, residues 19 to 519 (WSEPRIRLSS…MEVSDQIFTS (501 aa)) are extracellular. Ig-like C2-type domains are found at residues 22 to 109 (PRIR…VHVF), 120 to 198 (PSTS…EKVS), 213 to 305 (PYVY…TQLL), 316 to 407 (PKLS…ASIT), and 408 to 513 (FDIK…MEVS). Cysteine 48 and cysteine 92 are disulfide-bonded. 10 N-linked (GlcNAc...) asparagine glycosylation sites follow: asparagine 98, asparagine 101, asparagine 154, asparagine 163, asparagine 244, asparagine 286, asparagine 298, asparagine 361, asparagine 424, and asparagine 455. Intrachain disulfides connect cysteine 138-cysteine 187 and cysteine 234-cysteine 289. A disulfide bond links cysteine 430 and cysteine 495. Residues 520–540 (AMCGSTVAMVVLGLLLIFMIY) traverse the membrane as a helical segment. Residues 541 to 977 (KYKQKPRYEI…LMKPNNYQFC (437 aa)) are Cytoplasmic-facing. The interval 544–576 (QKPRYEIRWKIIEATNGNNYTFIDPTQLPYNEK) is regulatory juxtamembrane domain. The residue at position 563 (tyrosine 563) is a Phosphotyrosine; by autocatalysis. One can recognise a Protein kinase domain in the interval 584-917 (LKLGKTLGAG…KISQMIQRML (334 aa)). Residues 590 to 598 (LGAGAFGKV) and lysine 618 contribute to the ATP site. A phosphotyrosine; by autocatalysis mark is found at tyrosine 701 and tyrosine 725. Aspartate 781 acts as the Proton acceptor in catalysis. Positions 799–821 (DFGLARDIMNDSNYVVKGNARLP) are activation loop. Residues tyrosine 812 and tyrosine 929 each carry the phosphotyrosine; by autocatalysis modification. A disordered region spans residues 919–977 (ETSEQQDTQEYKNIPTEAEAEQQLESCDPVKHEDESFETSCDQEEEDQPLMKPNNYQFC). The segment covering 953-966 (ESFETSCDQEEEDQ) has biased composition (acidic residues). Tyrosine 974 is modified (phosphotyrosine; by autocatalysis).

This sequence belongs to the protein kinase superfamily. Tyr protein kinase family. CSF-1/PDGF receptor subfamily. Monomer. Homodimer. Interacts with CSF1. In terms of processing, autophosphorylated in response to CSF1 binding. autophosphorylation, leading to its degradation. Ubiquitinated. Becomes rapidly polyubiquitinated after autophosphorylation, leading to its degradation.

The protein localises to the cell membrane. It carries out the reaction L-tyrosyl-[protein] + ATP = O-phospho-L-tyrosyl-[protein] + ADP + H(+). Its activity is regulated as follows. Present in an inactive conformation in the absence of bound ligand. CSF1 binding leads to dimerization and activation by autophosphorylation on tyrosine residues. In terms of biological role, tyrosine-protein kinase that acts as a cell-surface receptor for CSF1 and plays an essential role in the regulation of survival, proliferation and differentiation of hematopoietic precursor cells, especially mononuclear phagocytes, such as macrophages and monocytes. Plays an important role in innate immunity and in inflammatory processes. Plays an important role in the regulation of osteoclast proliferation and differentiation, the regulation of bone resorption, and is required for normal bone development. Promotes reorganization of the actin cytoskeleton, regulates formation of membrane ruffles, cell adhesion and cell migration. Activates several signaling pathways in response to ligand binding. This is Macrophage colony-stimulating factor 1 receptor (csf1r) from Danio rerio (Zebrafish).